The chain runs to 204 residues: dTTP/UTP pyrophosphatase (204 aa).

Asp68 functions as the Proton acceptor in the catalytic mechanism.

The protein belongs to the Maf family. YhdE subfamily. The cofactor is a divalent metal cation.

It localises to the cytoplasm. The enzyme catalyses dTTP + H2O = dTMP + diphosphate + H(+). It catalyses the reaction UTP + H2O = UMP + diphosphate + H(+). Nucleoside triphosphate pyrophosphatase that hydrolyzes dTTP and UTP. May have a dual role in cell division arrest and in preventing the incorporation of modified nucleotides into cellular nucleic acids. The sequence is that of dTTP/UTP pyrophosphatase from Thermotoga maritima (strain ATCC 43589 / DSM 3109 / JCM 10099 / NBRC 100826 / MSB8).